Here is a 150-residue protein sequence, read N- to C-terminus: MADNDAIKVHDLRPAPGAKTAKTRVGRGEASKGKTAGRGTKGTKARYQVRAGFEGGQLPLQMRLPKLRGFKNPFRTEYQVVNLDKLSAHFPEGGEVTVDALVSKGLVRRGQPVKVLGTGEITAAVQVKANAFSASAVEKIQAAGGSTETL.

Residues 1–13 (MADNDAIKVHDLR) are compositionally biased toward basic and acidic residues. A disordered region spans residues 1-44 (MADNDAIKVHDLRPAPGAKTAKTRVGRGEASKGKTAGRGTKGTK).

This sequence belongs to the universal ribosomal protein uL15 family. Part of the 50S ribosomal subunit.

Functionally, binds to the 23S rRNA. This Micrococcus luteus (strain ATCC 4698 / DSM 20030 / JCM 1464 / CCM 169 / CCUG 5858 / IAM 1056 / NBRC 3333 / NCIMB 9278 / NCTC 2665 / VKM Ac-2230) (Micrococcus lysodeikticus) protein is Large ribosomal subunit protein uL15.